Reading from the N-terminus, the 449-residue chain is UNC93-like protein MFSD11 (449 aa).

The helical transmembrane segment at 8–28 (LFNIVILGVAFMFMFTAFQTC) threads the bilayer. An N-linked (GlcNAc...) asparagine glycan is attached at Asn40. Transmembrane regions (helical) follow at residues 53–73 (AIIY…VAIV), 74–94 (GPQI…AVFI), 96–116 (PFPW…AVLW), 138–158 (IFWA…YFAW), and 170–190 (RTVF…FFLI). Position 204 is a phosphoserine (Ser204). A run of 6 helical transmembrane segments spans residues 239 to 259 (MLLL…FSGV), 277 to 297 (LIGL…SLFG), 309 to 329 (PVVL…FLNM), 359 to 379 (FLLG…LGFL), 385 to 405 (APAF…AFFY), and 410 to 430 (LLHW…ISFF).

This sequence belongs to the unc-93 family. In terms of tissue distribution, widely expressed.

The protein localises to the membrane. The chain is UNC93-like protein MFSD11 (Mfsd11) from Mus musculus (Mouse).